We begin with the raw amino-acid sequence, 505 residues long: MAWENVRVRVAPSPTGDPHVGTAYMALFNEIFAKRFNGKMILRIEDTDQTRSRDDYEKNIFSALQWCGIQWDEGPDIGGPHGPYRQSERTEIYREYAELLLKTDYAYKCFATPKELEEMRAVATTLGYRGGYDRRYRYLSPEEIEARTQEGQPYTIRLKVPLTGECVLEDYCKGRVVFPWADVDDQVLMKSDGFPTYHFANVVDDHLMGITHVLRGEEWLSSTPKHLLLYEAFGWEPPIFLHMPLLLNPDGTKLSKRKNPTSIFYYRDAGYIKEAFMNFLTLMGYSMEGDEEVYSLEKLIANFDPKRIGKSGAVFDVRKLDWMNKHYLNHEGSPENLLARLKDWLVNDEFLLKILPLCQSRMATLAEFVGLSEFFFSVLPEYSKEELLPAAISQEKAAILFYSYVKYLEKTDLWVKDQFYLGSKWLSEAFQVHHKKVVIPLLYVAITGKKQGLPLFDSMELLGKPRTRMRMVHAQNLLGGVPKKIQTAIDKVLKEENFENKILEF.

A 'HIGH' region motif is present at residues 12–22 (PSPTGDPHVGT). A 'KMSKS' region motif is present at residues 253-257 (KLSKR). Residue Lys256 coordinates ATP.

The protein belongs to the class-I aminoacyl-tRNA synthetase family. Glutamate--tRNA ligase type 1 subfamily. Monomer.

Its subcellular location is the cytoplasm. It carries out the reaction tRNA(Glu) + L-glutamate + ATP = L-glutamyl-tRNA(Glu) + AMP + diphosphate. Catalyzes the attachment of glutamate to tRNA(Glu) in a two-step reaction: glutamate is first activated by ATP to form Glu-AMP and then transferred to the acceptor end of tRNA(Glu). The polypeptide is Glutamate--tRNA ligase (Chlamydia caviae (strain ATCC VR-813 / DSM 19441 / 03DC25 / GPIC) (Chlamydophila caviae)).